Here is a 415-residue protein sequence, read N- to C-terminus: Serine hydroxymethyltransferase 2 (415 aa).

Residues Leu122 and 126 to 128 contribute to the (6S)-5,6,7,8-tetrahydrofolate site; that span reads GHL. Lys230 carries the N6-(pyridoxal phosphate)lysine modification.

It belongs to the SHMT family. In terms of assembly, homodimer. Pyridoxal 5'-phosphate serves as cofactor.

It is found in the cytoplasm. The enzyme catalyses (6R)-5,10-methylene-5,6,7,8-tetrahydrofolate + glycine + H2O = (6S)-5,6,7,8-tetrahydrofolate + L-serine. It participates in one-carbon metabolism; tetrahydrofolate interconversion. Its pathway is amino-acid biosynthesis; glycine biosynthesis; glycine from L-serine: step 1/1. In terms of biological role, catalyzes the reversible interconversion of serine and glycine with tetrahydrofolate (THF) serving as the one-carbon carrier. This reaction serves as the major source of one-carbon groups required for the biosynthesis of purines, thymidylate, methionine, and other important biomolecules. Also exhibits THF-independent aldolase activity toward beta-hydroxyamino acids, producing glycine and aldehydes, via a retro-aldol mechanism. This is Serine hydroxymethyltransferase 2 from Burkholderia lata (strain ATCC 17760 / DSM 23089 / LMG 22485 / NCIMB 9086 / R18194 / 383).